The following is a 340-amino-acid chain: GTPase Obg (340 aa).

An Obg domain is found at 1 to 159; sequence MRFIDKAKIH…RWIELELKLI (159 aa). Residues 160–331 enclose the OBG-type G domain; the sequence is ADIGIIGFPN…LIKLIAEVYE (172 aa). GTP contacts are provided by residues 166–173, 191–195, 213–216, 283–286, and 312–314; these read GFPNAGKS, FTTLT, DIPG, NKID, and SLV. Mg(2+) is bound by residues Ser173 and Thr193.

It belongs to the TRAFAC class OBG-HflX-like GTPase superfamily. OBG GTPase family. Monomer. The cofactor is Mg(2+).

The protein resides in the cytoplasm. In terms of biological role, an essential GTPase which binds GTP, GDP and possibly (p)ppGpp with moderate affinity, with high nucleotide exchange rates and a fairly low GTP hydrolysis rate. Plays a role in control of the cell cycle, stress response, ribosome biogenesis and in those bacteria that undergo differentiation, in morphogenesis control. This chain is GTPase Obg, found in Persephonella marina (strain DSM 14350 / EX-H1).